A 428-amino-acid chain; its full sequence is AA14 family lytic polysaccharide monooxygenase A (428 aa).

The N-terminal stretch at 1–21 is a signal peptide; sequence MLRSLPASLALVAAFASKASA. Residues Asn34 and Asn52 are each glycosylated (N-linked (GlcNAc...) asparagine). 5 disulfides stabilise this stretch: Cys88-Cys112, Cys131-Cys158, Cys174-Cys179, Cys181-Cys203, and Cys223-Cys239. An N-linked (GlcNAc...) asparagine glycan is attached at Asn155. Disordered regions lie at residues 216-239 and 292-428; these read KPAV…PGNC and SSGT…HNAH. Residues 223-232 are compositionally biased toward basic and acidic residues; sequence CGADPDHGKP. Asn238 carries N-linked (GlcNAc...) asparagine glycosylation. Positions 292-379 are enriched in low complexity; the sequence is SSGTGSSPTS…SVATEASSSP (88 aa). Polar residues predominate over residues 380-402; it reads IASTTVDEAVVSSSTVGSINPTR. The segment covering 414-428 has biased composition (basic residues); it reads QKKKRKHARHLHNAH.

It depends on Cu(2+) as a cofactor.

Its subcellular location is the secreted. Its function is as follows. Lytic polysaccharide monooxygenase (LPMO) showing oxidase and peroxidase activities that are common for LPMOs. Catalysis by LPMOs requires the reduction of the active-site copper from Cu(II) to Cu(I) by a reducing agent and H(2)O(2) or O(2) as a cosubstrate. Shows no activity on cellulose-associated xylan or any other tested polysaccharide substrate, meaning that the substrate rremains unknown. The sequence is that of AA14 family lytic polysaccharide monooxygenase A from Trametes coccinea (strain BRFM310) (Pycnoporus coccineus).